A 636-amino-acid polypeptide reads, in one-letter code: Bifunctional phosphonoacetaldehyde hydrolase/aminoethylphosphonate transaminase (636 aa).

Residues 1-276 form a phosphonoacetaldehyde hydrolase region; the sequence is MKKIYGEKIK…IKSDFVPEND (276 aa). The active-site Nucleophile is D15. The Mg(2+) site is built by D15 and A17. The Schiff-base intermediate with substrate role is filled by K56. D189 contacts Mg(2+). Residues 277–636 form a 2-aminoethylphosphonate--pyruvate transaminase region; sequence YILLTPGPLS…ADVIEKFINR (360 aa). K465 is modified (N6-(pyridoxal phosphate)lysine).

This sequence in the N-terminal section; belongs to the HAD-like hydrolase superfamily. PhnX family. It in the C-terminal section; belongs to the class-V pyridoxal-phosphate-dependent aminotransferase family. PhnW subfamily. Homodimer. Mg(2+) is required as a cofactor. Pyridoxal 5'-phosphate serves as cofactor.

It catalyses the reaction (2-aminoethyl)phosphonate + pyruvate = phosphonoacetaldehyde + L-alanine. The enzyme catalyses phosphonoacetaldehyde + H2O = acetaldehyde + phosphate + H(+). In terms of biological role, involved in phosphonate degradation. The polypeptide is Bifunctional phosphonoacetaldehyde hydrolase/aminoethylphosphonate transaminase (phnXW) (Clostridioides difficile (strain 630) (Peptoclostridium difficile)).